A 129-amino-acid chain; its full sequence is Small ribosomal subunit protein uS11 (129 aa).

It belongs to the universal ribosomal protein uS11 family. As to quaternary structure, part of the 30S ribosomal subunit. Interacts with proteins S7 and S18. Binds to IF-3.

Functionally, located on the platform of the 30S subunit, it bridges several disparate RNA helices of the 16S rRNA. Forms part of the Shine-Dalgarno cleft in the 70S ribosome. The chain is Small ribosomal subunit protein uS11 from Geobacillus sp. (strain WCH70).